The chain runs to 322 residues: tRNA dimethylallyltransferase (322 aa).

21–28 (GQTAVGKT) provides a ligand contact to ATP. A substrate-binding site is contributed by 23–28 (TAVGKT). The segment at 46-49 (DSGC) is interaction with substrate tRNA.

Belongs to the IPP transferase family. In terms of assembly, monomer. Mg(2+) is required as a cofactor.

The enzyme catalyses adenosine(37) in tRNA + dimethylallyl diphosphate = N(6)-dimethylallyladenosine(37) in tRNA + diphosphate. Catalyzes the transfer of a dimethylallyl group onto the adenine at position 37 in tRNAs that read codons beginning with uridine, leading to the formation of N6-(dimethylallyl)adenosine (i(6)A). The protein is tRNA dimethylallyltransferase of Wigglesworthia glossinidia brevipalpis.